The sequence spans 396 residues: MLVIKELKIDGIGGINSLKLNFNEGLNLICGPNGVGKTTILESIGHMFSNGSRSKVKRNVKFDQGSCEISYSTFLDTIHTQSCILRNYEENDSLDWHGGNANLAKEVIVFKAQRSFTYTQLDSLRKDTETSDGKFLDDSMNGIQFFDFKNWFIHRFLFSHVDNELTTVQKENFKLATDCFGILDNSIRFSSVKSDTFDIIISTSNGEIYFEYLSSGFKSCIYIIHGLIKEIEYRFKNDGGIKVQDYEGLILIDELDLHLHPQWQAKMIYLIKHILPKAQIIATTHSPHMVQAAAINELIALGIDEDADVYVRQLPNVQYGFQGWTVEEILEDVMGLDETRSPMYIEAITEFEKSLDEENEEKIFEAYYKLDLMLHPSNPLRKLLKLQVAQFGRVIE.

In terms of biological role, component of antiviral defense system Septu type I, composed of PtuA and PtuB. Expression of Septu type I in B.subtilis (strain BEST7003) confers resistance to phages SBSphiC and SBSphiJ. May be an ATPase. The sequence is that of Septu protein PtuA from Bacillus thuringiensis.